Here is a 591-residue protein sequence, read N- to C-terminus: Aspartate--tRNA(Asp/Asn) ligase (591 aa).

Glutamate 175 lines the L-aspartate pocket. The interval 199–202 is aspartate; sequence QQFK. L-aspartate contacts are provided by arginine 221 and histidine 453. ATP is bound at residue 221–223; sequence RDE. ATP is bound at residue glutamate 486. An L-aspartate-binding site is contributed by arginine 493. 538–541 provides a ligand contact to ATP; that stretch reads GIDR.

This sequence belongs to the class-II aminoacyl-tRNA synthetase family. Type 1 subfamily. In terms of assembly, homodimer.

The protein localises to the cytoplasm. It catalyses the reaction tRNA(Asx) + L-aspartate + ATP = L-aspartyl-tRNA(Asx) + AMP + diphosphate. Functionally, aspartyl-tRNA synthetase with relaxed tRNA specificity since it is able to aspartylate not only its cognate tRNA(Asp) but also tRNA(Asn). Reaction proceeds in two steps: L-aspartate is first activated by ATP to form Asp-AMP and then transferred to the acceptor end of tRNA(Asp/Asn). This chain is Aspartate--tRNA(Asp/Asn) ligase, found in Cereibacter sphaeroides (strain KD131 / KCTC 12085) (Rhodobacter sphaeroides).